The primary structure comprises 351 residues: UDP-N-acetylglucosamine--N-acetylmuramyl-(pentapeptide) pyrophosphoryl-undecaprenol N-acetylglucosamine transferase (351 aa).

Residues 13-15 (TGG), N125, R161, S189, I241, 260-265 (ALTVCE), and Q285 contribute to the UDP-N-acetyl-alpha-D-glucosamine site.

The protein belongs to the glycosyltransferase 28 family. MurG subfamily.

The protein localises to the cell inner membrane. It catalyses the reaction di-trans,octa-cis-undecaprenyl diphospho-N-acetyl-alpha-D-muramoyl-L-alanyl-D-glutamyl-meso-2,6-diaminopimeloyl-D-alanyl-D-alanine + UDP-N-acetyl-alpha-D-glucosamine = di-trans,octa-cis-undecaprenyl diphospho-[N-acetyl-alpha-D-glucosaminyl-(1-&gt;4)]-N-acetyl-alpha-D-muramoyl-L-alanyl-D-glutamyl-meso-2,6-diaminopimeloyl-D-alanyl-D-alanine + UDP + H(+). Its pathway is cell wall biogenesis; peptidoglycan biosynthesis. In terms of biological role, cell wall formation. Catalyzes the transfer of a GlcNAc subunit on undecaprenyl-pyrophosphoryl-MurNAc-pentapeptide (lipid intermediate I) to form undecaprenyl-pyrophosphoryl-MurNAc-(pentapeptide)GlcNAc (lipid intermediate II). The chain is UDP-N-acetylglucosamine--N-acetylmuramyl-(pentapeptide) pyrophosphoryl-undecaprenol N-acetylglucosamine transferase from Haemophilus influenzae (strain PittEE).